Here is a 327-residue protein sequence, read N- to C-terminus: Phenylalanine--tRNA ligase alpha subunit (327 aa).

Glutamate 252 lines the Mg(2+) pocket.

The protein belongs to the class-II aminoacyl-tRNA synthetase family. Phe-tRNA synthetase alpha subunit type 1 subfamily. In terms of assembly, tetramer of two alpha and two beta subunits. The cofactor is Mg(2+).

The protein resides in the cytoplasm. The enzyme catalyses tRNA(Phe) + L-phenylalanine + ATP = L-phenylalanyl-tRNA(Phe) + AMP + diphosphate + H(+). This chain is Phenylalanine--tRNA ligase alpha subunit, found in Aeromonas hydrophila subsp. hydrophila (strain ATCC 7966 / DSM 30187 / BCRC 13018 / CCUG 14551 / JCM 1027 / KCTC 2358 / NCIMB 9240 / NCTC 8049).